The chain runs to 109 residues: Aquaporin-2 (109 aa).

Over 1 to 6 the chain is Cytoplasmic; sequence SVAFSR. A helical transmembrane segment spans residues 7 to 27; the sequence is AVLAEFLATLIFVFFGLGSAL. The Extracellular segment spans residues 28 to 35; the sequence is SWPQALPS. Residues 36–54 traverse the membrane as a helical segment; it reads VLQIALAFGLAIGTLVQAL. Residues 55-59 are Cytoplasmic-facing; it reads GHVSG. The discontinuously helical intramembrane region spans 60–69; it reads AHINPAVTVA. The NPA 1 motif lies at 63–65; that stretch reads NPA. Residues 70 to 80 lie on the Cytoplasmic side of the membrane; the sequence is CLVGCHVSFLR. Residues 81–102 traverse the membrane as a helical segment; that stretch reads AAFYVAAQLLGAVAGAAILHEI. Over 103–109 the chain is Extracellular; that stretch reads TPPDVRG.

The protein belongs to the MIP/aquaporin (TC 1.A.8) family. In terms of assembly, homotetramer. Serine phosphorylation is necessary and sufficient for expression at the apical membrane. Endocytosis is not phosphorylation-dependent. Post-translationally, N-glycosylated.

The protein localises to the apical cell membrane. Its subcellular location is the basolateral cell membrane. It is found in the cell membrane. It localises to the cytoplasmic vesicle membrane. The protein resides in the golgi apparatus. The protein localises to the trans-Golgi network membrane. It catalyses the reaction H2O(in) = H2O(out). The enzyme catalyses glycerol(in) = glycerol(out). Its function is as follows. Forms a water-specific channel that provides the plasma membranes of renal collecting duct with high permeability to water, thereby permitting water to move in the direction of an osmotic gradient. Plays an essential role in renal water homeostasis. Could also be permeable to glycerol. In Dasypus novemcinctus (Nine-banded armadillo), this protein is Aquaporin-2.